A 159-amino-acid chain; its full sequence is Putative pre-16S rRNA nuclease (159 aa).

This sequence belongs to the YqgF nuclease family.

It localises to the cytoplasm. Could be a nuclease involved in processing of the 5'-end of pre-16S rRNA. This is Putative pre-16S rRNA nuclease from Synechococcus sp. (strain JA-3-3Ab) (Cyanobacteria bacterium Yellowstone A-Prime).